A 472-amino-acid polypeptide reads, in one-letter code: Putative F-box/LRR-repeat protein At5g54820 (472 aa).

Positions 6–54 (QDRLSSLPDILLIMIISFLPLKECVRTSVLSKRWRYLCLETTNLSFKES) constitute an F-box domain. 6 LRR repeats span residues 58 to 87 (NPDITDAEYSRIVAYRSFFCSVDKWVSITQ), 135 to 164 (NGDISYRHFMYTLPKSVYSLTTLESLKIYG), 183 to 208 (IGWVRLENLHSLLSKSPSLQSLSIKN), 225 to 250 (VIEHSDFSYMQCAFELPRIHSFKYSG), 283 to 308 (SSRISGEVISRIINDLRAAETLTVCP), and 338 to 363 (MHTKEFNGIILLLNNCPNLETLGFDI).

This is Putative F-box/LRR-repeat protein At5g54820 from Arabidopsis thaliana (Mouse-ear cress).